The following is a 361-amino-acid chain: Ribosomal RNA large subunit methyltransferase M (361 aa).

S-adenosyl-L-methionine-binding positions include Ser-190, 223–226, Asp-242, Asp-262, and Asp-280; that span reads CPGG. Lys-309 acts as the Proton acceptor in catalysis.

This sequence belongs to the class I-like SAM-binding methyltransferase superfamily. RNA methyltransferase RlmE family. RlmM subfamily. As to quaternary structure, monomer.

It localises to the cytoplasm. The catalysed reaction is cytidine(2498) in 23S rRNA + S-adenosyl-L-methionine = 2'-O-methylcytidine(2498) in 23S rRNA + S-adenosyl-L-homocysteine + H(+). In terms of biological role, catalyzes the 2'-O-methylation at nucleotide C2498 in 23S rRNA. This chain is Ribosomal RNA large subunit methyltransferase M, found in Actinobacillus pleuropneumoniae serotype 7 (strain AP76).